Here is a 206-residue protein sequence, read N- to C-terminus: Large ribosomal subunit protein uL4 (206 aa).

The segment at 63 to 97 (MYKQKGTGRARHHSARAPQFRGGGKAHGPVVRSHE) is disordered. Over residues 64–77 (YKQKGTGRARHHSA) the composition is skewed to basic residues.

This sequence belongs to the universal ribosomal protein uL4 family. As to quaternary structure, part of the 50S ribosomal subunit.

Its function is as follows. One of the primary rRNA binding proteins, this protein initially binds near the 5'-end of the 23S rRNA. It is important during the early stages of 50S assembly. It makes multiple contacts with different domains of the 23S rRNA in the assembled 50S subunit and ribosome. Forms part of the polypeptide exit tunnel. The chain is Large ribosomal subunit protein uL4 from Rhizobium rhizogenes (strain K84 / ATCC BAA-868) (Agrobacterium radiobacter).